The primary structure comprises 678 residues: DNA ligase (678 aa).

NAD(+) contacts are provided by residues 47 to 51 (DSDYD), 96 to 97 (SL), and E122. K124 functions as the N6-AMP-lysine intermediate in the catalytic mechanism. Positions 145, 182, 300, and 324 each coordinate NAD(+). Positions 418, 421, 436, and 442 each coordinate Zn(2+). The BRCT domain maps to 602–678 (AYNESFTGKT…ILEDNLKDLL (77 aa)).

Belongs to the NAD-dependent DNA ligase family. LigA subfamily. The cofactor is Mg(2+). It depends on Mn(2+) as a cofactor.

The catalysed reaction is NAD(+) + (deoxyribonucleotide)n-3'-hydroxyl + 5'-phospho-(deoxyribonucleotide)m = (deoxyribonucleotide)n+m + AMP + beta-nicotinamide D-nucleotide.. In terms of biological role, DNA ligase that catalyzes the formation of phosphodiester linkages between 5'-phosphoryl and 3'-hydroxyl groups in double-stranded DNA using NAD as a coenzyme and as the energy source for the reaction. It is essential for DNA replication and repair of damaged DNA. This is DNA ligase from Francisella tularensis subsp. holarctica (strain FTNF002-00 / FTA).